Consider the following 977-residue polypeptide: Serine/threonine-protein kinase N2 (977 aa).

3 REM-1 domains span residues 24 to 100, 114 to 194, and 200 to 280; these read NLDF…HIVV, DTPK…TSEI, and DVTT…ELPK. One can recognise a C2 domain in the interval 298 to 468; the sequence is PPNSPRQSIM…LYLEPQGTLF (171 aa). 2 disordered regions span residues 342 to 381 and 531 to 576; these read GRSK…LSKS and AADL…KRNS. Residues 358 to 378 show a composition bias toward polar residues; sequence EARSSFMSRGNKNKSGSSRTL. Positions 650 to 909 constitute a Protein kinase domain; the sequence is FKCVAVLGRG…AEEVKRHPFF (260 aa). Residues 656-664 and Lys679 contribute to the ATP site; that span reads LGRGHFGKV. The active-site Proton acceptor is the Asp775. The AGC-kinase C-terminal domain occupies 910-977; it reads RDMDWPGLLA…ADFDYIADWC (68 aa).

The protein belongs to the protein kinase superfamily. AGC Ser/Thr protein kinase family. PKC subfamily. In terms of processing, autophosphorylated. Phosphorylated. Proteolytically cleaved.

Its subcellular location is the cytoplasm. It is found in the nucleus. The protein localises to the membrane. The protein resides in the cell projection. It localises to the lamellipodium. Its subcellular location is the cytoskeleton. It is found in the cleavage furrow. The protein localises to the midbody. The protein resides in the cell junction. The catalysed reaction is L-seryl-[protein] + ATP = O-phospho-L-seryl-[protein] + ADP + H(+). It carries out the reaction L-threonyl-[protein] + ATP = O-phospho-L-threonyl-[protein] + ADP + H(+). With respect to regulation, kinase activity is activated upon binding to GTP-bound Rho/Rac GTPases. Activated by lipids, particularly cardiolipin and to a lesser extent by other acidic phospholipids and unsaturated fatty acids. Two specific sites, Thr-809 (activation loop of the kinase domain) and Thr-951 (turn motif), may be needed to be phosphorylated for its full activation. Pkc-related serine/threonine-protein kinase and Rho/Rac effector protein that participates in specific signal transduction responses in the cell. May play a role in the regulation of cell cycle progression, actin cytoskeleton assembly, cell migration, cell adhesion and transcription activation signaling processes. The polypeptide is Serine/threonine-protein kinase N2 (pkn2) (Danio rerio (Zebrafish)).